A 240-amino-acid chain; its full sequence is MSNEAGGGIHKLICLLCDSQFSQDVTWRALFLLKPDEKVCYSCRSKLKKITGHICPLCGRPQSVHAVCRDCEVWRTRIRDSLLLRQNRSVYTYNDMMKETLSRFKFRGDAEIINAFKSDFSSTFSKVYPDKHFVLVPIPLSKEREEERGFNQAHLLAECLDRPSHHPLIRLNNEKQSKKKKTERLLSECIFDTKNNSAEGMNIILIDDLYTTGATLHFAARCLLEKGKAASVSSFTLIRS.

This sequence belongs to the ComF/GntX family. Monomer and dimer in solution. Interacts with ComFA and DprA; ComFA-ComFC form rings about 150 Angstroms in diameter with apparent 6-fold symmetry.

In terms of biological role, involved in transformation (genetic competence for DNA uptake). This Bacillus subtilis (strain 168) protein is Competence protein ComFC (comFC).